Consider the following 190-residue polypeptide: Holliday junction branch migration complex subunit RuvA (190 aa).

Residues 1–63 (MLDFIKGKVI…EESIEIYGFL (63 aa)) are domain I. Residues 64-139 (ESSERDLFEE…ILPSLQYEKD (76 aa)) are domain II. Residue Asp-139 is a region of interest, flexible linker. The interval 139–190 (DQKYDDILSALLNLGYKRLEAKEVLDKIYNNEKDEATIIRESLSILAGKDGK) is domain III.

The protein belongs to the RuvA family. As to quaternary structure, homotetramer. Forms an RuvA(8)-RuvB(12)-Holliday junction (HJ) complex. HJ DNA is sandwiched between 2 RuvA tetramers; dsDNA enters through RuvA and exits via RuvB. An RuvB hexamer assembles on each DNA strand where it exits the tetramer. Each RuvB hexamer is contacted by two RuvA subunits (via domain III) on 2 adjacent RuvB subunits; this complex drives branch migration. In the full resolvosome a probable DNA-RuvA(4)-RuvB(12)-RuvC(2) complex forms which resolves the HJ.

It is found in the cytoplasm. Its function is as follows. The RuvA-RuvB-RuvC complex processes Holliday junction (HJ) DNA during genetic recombination and DNA repair, while the RuvA-RuvB complex plays an important role in the rescue of blocked DNA replication forks via replication fork reversal (RFR). RuvA specifically binds to HJ cruciform DNA, conferring on it an open structure. The RuvB hexamer acts as an ATP-dependent pump, pulling dsDNA into and through the RuvAB complex. HJ branch migration allows RuvC to scan DNA until it finds its consensus sequence, where it cleaves and resolves the cruciform DNA. This is Holliday junction branch migration complex subunit RuvA from Thermodesulfovibrio yellowstonii (strain ATCC 51303 / DSM 11347 / YP87).